Reading from the N-terminus, the 115-residue chain is WLMIVEKECRVIVMLAKCYEAGKKKCQKYWPDSKDTLTFGQIKVFNAEEVRYSGFLVRKFQIESVEKMITMEVFQYQYTNWPDHSVPYTTSNLVRMHKNVIQLLAEIGGDAPMVV.

The region spanning 1 to 115 (WLMIVEKECR…EIGGDAPMVV (115 aa)) is the Tyrosine-protein phosphatase domain. Asp-83 lines the substrate pocket.

It belongs to the protein-tyrosine phosphatase family.

The catalysed reaction is O-phospho-L-tyrosyl-[protein] + H2O = L-tyrosyl-[protein] + phosphate. The chain is Tyrosine-protein phosphatase 21 (STY-21) from Styela plicata (Wrinkled sea squirt).